Reading from the N-terminus, the 110-residue chain is Small ribosomal subunit protein bS16 (110 aa).

The tract at residues 87–110 is disordered; it reads ARQNPIKAVPRKERKAQAEAAAKG.

It belongs to the bacterial ribosomal protein bS16 family.

In Bradyrhizobium sp. (strain BTAi1 / ATCC BAA-1182), this protein is Small ribosomal subunit protein bS16.